A 177-amino-acid polypeptide reads, in one-letter code: Preprotein translocase subunit SECE1 (177 aa).

A chloroplast-targeting transit peptide spans 1 to 38 (MSLTAQFSPPVTGITRSLRDTKPSLSNLRVFPVYTEIR). The disordered stretch occupies residues 60 to 87 (RDTAGSESESEATPSPAEESGSGEDKEV). Low complexity predominate over residues 64–79 (GSESESEATPSPAEES). A helical membrane pass occupies residues 140 to 160 (VVLGVIAGSSVVLLTVNFLLA).

The protein belongs to the SecE/SEC61-gamma family. As to quaternary structure, part of the Sec protein translocation apparatus. Interacts with SCY1 and ALB3.

Its subcellular location is the plastid. The protein resides in the chloroplast thylakoid membrane. Its function is as follows. Involved in the import/insertion pathway in the thylakoids. The signal recognition particle is not involved in the insertion of SECE1 in the thylakoid membrane. This Arabidopsis thaliana (Mouse-ear cress) protein is Preprotein translocase subunit SECE1 (SECE1).